The sequence spans 241 residues: Lipoprotein-releasing system ATP-binding protein LolD 2 (241 aa).

Residues 6-241 enclose the ABC transporter domain; that stretch reads LDAQQLSKSY…YKSYEKSTAV (236 aa). Residue 43–50 coordinates ATP; it reads GASGSGKT.

This sequence belongs to the ABC transporter superfamily. Lipoprotein translocase (TC 3.A.1.125) family. In terms of assembly, the complex is composed of two ATP-binding proteins (LolD) and two transmembrane proteins (LolC and LolE).

It localises to the cell inner membrane. Its function is as follows. Part of the ABC transporter complex LolCDE involved in the translocation of mature outer membrane-directed lipoproteins, from the inner membrane to the periplasmic chaperone, LolA. Responsible for the formation of the LolA-lipoprotein complex in an ATP-dependent manner. The chain is Lipoprotein-releasing system ATP-binding protein LolD 2 from Chlorobium chlorochromatii (strain CaD3).